The following is a 916-amino-acid chain: Translation initiation factor IF-2 (916 aa).

Residues 55 to 324 (EPKAVTPTSK…NHNANLKPVT (270 aa)) form a disordered region. Low complexity predominate over residues 77–88 (AAEPKAAATKPA). Composition is skewed to basic and acidic residues over residues 98–121 (FKAE…ERRN), 129–161 (RQKD…DNRN), and 198–212 (RQSE…EAKR). Positions 227–250 (KEQPTVEAAATAAPQAQPQTVEQV) are enriched in low complexity. Positions 264-281 (ARPDKSRDFSHENEDGPK) are enriched in basic and acidic residues. The span at 291 to 304 (KQNQVRNQKNSNWN) shows a compositional bias: low complexity. Over residues 305–314 (KKNKKSKNNR) the composition is skewed to basic residues. The 168-residue stretch at 418–585 (ERAPVVTIMG…TVLLVAEIQE (168 aa)) folds into the tr-type G domain. Positions 427–434 (GHVDHGKT) are G1. Position 427–434 (427–434 (GHVDHGKT)) interacts with GTP. A G2 region spans residues 452–456 (GITQH). Residues 473 to 476 (DTPG) form a G3 region. GTP-binding positions include 473-477 (DTPGH) and 527-530 (NKID). The segment at 527–530 (NKID) is G4. The G5 stretch occupies residues 563-565 (SAK).

Belongs to the TRAFAC class translation factor GTPase superfamily. Classic translation factor GTPase family. IF-2 subfamily.

Its subcellular location is the cytoplasm. Functionally, one of the essential components for the initiation of protein synthesis. Protects formylmethionyl-tRNA from spontaneous hydrolysis and promotes its binding to the 30S ribosomal subunits. Also involved in the hydrolysis of GTP during the formation of the 70S ribosomal complex. In Streptococcus mutans serotype c (strain ATCC 700610 / UA159), this protein is Translation initiation factor IF-2.